Here is a 238-residue protein sequence, read N- to C-terminus: Ribose-5-phosphate isomerase A (238 aa).

Residues 30–33, 87–90, and 100–103 each bind substrate; these read SGST, DGAD, and KGGG. The Proton acceptor role is filled by glutamate 109. Lysine 127 lines the substrate pocket.

This sequence belongs to the ribose 5-phosphate isomerase family. In terms of assembly, homodimer.

The enzyme catalyses aldehydo-D-ribose 5-phosphate = D-ribulose 5-phosphate. It participates in carbohydrate degradation; pentose phosphate pathway; D-ribose 5-phosphate from D-ribulose 5-phosphate (non-oxidative stage): step 1/1. Its function is as follows. Catalyzes the reversible conversion of ribose-5-phosphate to ribulose 5-phosphate. The protein is Ribose-5-phosphate isomerase A of Synechococcus sp. (strain WH7803).